The following is a 128-amino-acid chain: Large ribosomal subunit protein uL24 (128 aa).

A disordered region spans residues 105-128; that stretch reads KAKSRQVGKEKGKYKEETIEKMQE.

It belongs to the universal ribosomal protein uL24 family. In terms of assembly, component of the large ribosomal subunit.

It is found in the cytoplasm. Functionally, component of the large ribosomal subunit. The ribosome is a large ribonucleoprotein complex responsible for the synthesis of proteins in the cell. This chain is Large ribosomal subunit protein uL24 (RPL26), found in Gallus gallus (Chicken).